A 60-amino-acid chain; its full sequence is MNAAFIAALFILGALTLDAMAYSPTCEGKPCANNTDCKGSNLCQCRPPRGDDWRNFCSEY.

Residues 1–21 (MNAAFIAALFILGALTLDAMA) form the signal peptide. The Cell attachment site signature appears at 49 to 51 (RGD).

Belongs to the ixodegrin family. Contains 3 disulfide bonds. As to expression, expressed in salivary glands.

It localises to the secreted. Functionally, tick salivary platelet aggregation inhibitor that plays an important part in the anti-hemostatic strategy of ticks. Inhibits platelet aggregation induced by ADP, thrombin and thromboxane A2 (TXA2). Blocks platelet adhesion to soluble collagen (most probably through the binding to alpha-2/beta-1 integrin (ITGA2/ITGB1)) and binds to purified glycoprotein IIb/IIIa (ITGA2B/ITGB3) in a dose-dependent manner. In vivo, reduces thrombus weight effectively in a rat arteriovenous shunt model and inhibits thrombosis in a carrageenan-induced mouse tail thrombosis model. The chain is Ixodegrin-Ip from Ixodes pacificus (Western black-legged tick).